The following is a 413-amino-acid chain: Argininosuccinate synthase (413 aa).

Residues Ala-14–Ser-22 and Ala-41 contribute to the ATP site. Residues Tyr-94 and Ser-99 each coordinate L-citrulline. Residue Gly-124 participates in ATP binding. L-aspartate is bound by residues Thr-126, Asn-130, and Asp-131. Residue Asn-130 coordinates L-citrulline. Residues Arg-134, Ser-185, Ser-194, Glu-270, and Tyr-282 each coordinate L-citrulline.

Belongs to the argininosuccinate synthase family. Type 1 subfamily. Homotetramer.

Its subcellular location is the cytoplasm. It carries out the reaction L-citrulline + L-aspartate + ATP = 2-(N(omega)-L-arginino)succinate + AMP + diphosphate + H(+). The protein operates within amino-acid biosynthesis; L-arginine biosynthesis; L-arginine from L-ornithine and carbamoyl phosphate: step 2/3. The polypeptide is Argininosuccinate synthase (Hyphomonas neptunium (strain ATCC 15444)).